Here is a 282-residue protein sequence, read N- to C-terminus: Pantothenate synthetase (282 aa).

30–37 is an ATP binding site; sequence MGYLHEGH. Residue H37 is the Proton donor of the active site. Q61 serves as a coordination point for (R)-pantoate. Q61 serves as a coordination point for beta-alanine. Position 147–150 (147–150) interacts with ATP; sequence GQKD. Q153 provides a ligand contact to (R)-pantoate. Residues V176 and 184–187 contribute to the ATP site; that span reads MSSR.

Belongs to the pantothenate synthetase family. In terms of assembly, homodimer.

It is found in the cytoplasm. The catalysed reaction is (R)-pantoate + beta-alanine + ATP = (R)-pantothenate + AMP + diphosphate + H(+). It functions in the pathway cofactor biosynthesis; (R)-pantothenate biosynthesis; (R)-pantothenate from (R)-pantoate and beta-alanine: step 1/1. In terms of biological role, catalyzes the condensation of pantoate with beta-alanine in an ATP-dependent reaction via a pantoyl-adenylate intermediate. The protein is Pantothenate synthetase of Pelotomaculum thermopropionicum (strain DSM 13744 / JCM 10971 / SI).